The sequence spans 731 residues: SUN domain-containing protein 2 (731 aa).

Disordered stretches follow at residues 1 to 69 and 106 to 142; these read MSRR…SHTS and SGDL…FGSS. The interval 1–128 is LMNA-binding; it reads MSRRSQRLTR…GSESSKANGL (128 aa). Topologically, residues 1 to 226 are nuclear; it reads MSRRSQRLTR…SRHFSLNLKS (226 aa). The residue at position 12 (S12) is a Phosphoserine. Low complexity predominate over residues 18–33; it reads GGSSSSGASSVAGSQG. Phosphoserine is present on residues S39 and S55. Residue T117 is modified to Phosphothreonine. 3 positions are modified to phosphoserine: S120, S123, and S147. A helical transmembrane segment spans residues 227–247; that stretch reads FLWFLLLLLLLTGLTYGAWHF. At 248–731 the chain is on the perinuclear space side; that stretch reads YPLGLQTLQP…RFRVHGEPAH (484 aa). Coiled-coil stretches lie at residues 396–452 and 486–519; these read QESE…VADE and RSGL…KSAR. The tract at residues 521 to 731 is sufficient for interaction with SYNE1 and SYNE2; it reads AAASLGQILQ…RFRVHGEPAH (211 aa). Residues 569 to 730 enclose the SUN domain; the sequence is GASVISTRCS…YRFRVHGEPA (162 aa). The N-linked (GlcNAc...) asparagine glycan is linked to N650.

In terms of assembly, core component of the LINC complex which is composed of inner nuclear membrane SUN domain-containing proteins coupled to outer nuclear membrane KASH domain-containing nesprins. SUN and KASH domain-containing proteins seem to bind each other promiscuously; however, differentially expression of LINC complex constituents is giving rise to specific assemblies. At least SUN1/2-containing core LINC complexes are proposed to be hexameric composed of three protomers of each KASH and SUN domain-containing protein. Interacts with SYNE2; the SUN2:SYNE2/KASH2 LINC complex is a heterohexamer; the homotrimeric cloverleave-like conformation of the SUN domain is a prerequisite for LINC complex formation in which three separate SYNE2/KASH2 peptides bind at the interface of adjacent SUN domains. Component of a probable SUN2:KASH5 LINC complex. Interacts with SYNE1 and SYNE3; probably forming respective LINC complexes. Interacts with A-type lamin. Interaction with lamins B1 and C is hardly detectable. Interacts with EMD. Interacts with RAB5A. Interacts with TMEM43 and TMEM201. Interacts with IRAG2. The disulfide bond with SYNE2 is required for stability of the SUN2:SYNE2/KASH2 LINC complex under tensile forces though not required for the interaction. The disulfide bond is proposed to be conserved in LINC complexes involved in force transmission. As to expression, highly expressed in heart, placenta and muscle.

Its subcellular location is the nucleus inner membrane. It localises to the nucleus envelope. It is found in the endosome membrane. Its function is as follows. As a component of the LINC (LInker of Nucleoskeleton and Cytoskeleton) complex, involved in the connection between the nuclear lamina and the cytoskeleton. The nucleocytoplasmic interactions established by the LINC complex play an important role in the transmission of mechanical forces across the nuclear envelope and in nuclear movement and positioning. Specifically, SYNE2 and SUN2 assemble in arrays of transmembrane actin-associated nuclear (TAN) lines which are bound to F-actin cables and couple the nucleus to retrograde actin flow during actin-dependent nuclear movement. Required for interkinetic nuclear migration (INM) and essential for nucleokinesis and centrosome-nucleus coupling during radial neuronal migration in the cerebral cortex and during glial migration. Required for nuclear migration in retinal photoreceptor progenitors implicating association with cytoplasmic dynein-dynactin and kinesin motor complexes, and probably B-type lamins; SUN1 and SUN2 seem to act redundantly. The SUN1/2:KASH5 LINC complex couples telomeres to microtubules during meiosis; SUN1 and SUN2 seem to act at least partial redundantly. Anchors chromosome movement in the prophase of meiosis and is involved in selective gene expression of coding and non-coding RNAs needed for gametogenesis. Required for telomere attachment to nuclear envelope and gametogenesis. May also function on endocytic vesicles as a receptor for Rab5-GDP and participate in the activation of Rab5. This Mus musculus (Mouse) protein is SUN domain-containing protein 2.